Consider the following 312-residue polypeptide: Ribosomal protein L11 methyltransferase (312 aa).

Residues T163, G184, D206, and N248 each contribute to the S-adenosyl-L-methionine site.

The protein belongs to the methyltransferase superfamily. PrmA family.

It is found in the cytoplasm. It carries out the reaction L-lysyl-[protein] + 3 S-adenosyl-L-methionine = N(6),N(6),N(6)-trimethyl-L-lysyl-[protein] + 3 S-adenosyl-L-homocysteine + 3 H(+). Methylates ribosomal protein L11. The polypeptide is Ribosomal protein L11 methyltransferase (Clostridium botulinum (strain Okra / Type B1)).